The primary structure comprises 434 residues: Enolase (434 aa).

Residue Gln-163 participates in (2R)-2-phosphoglycerate binding. Glu-205 acts as the Proton donor in catalysis. Asp-242, Glu-291, and Asp-318 together coordinate Mg(2+). Lys-343, Arg-372, Ser-373, and Lys-394 together coordinate (2R)-2-phosphoglycerate. The active-site Proton acceptor is the Lys-343.

The protein belongs to the enolase family. Mg(2+) is required as a cofactor.

The protein localises to the cytoplasm. It localises to the secreted. It is found in the cell surface. The enzyme catalyses (2R)-2-phosphoglycerate = phosphoenolpyruvate + H2O. It functions in the pathway carbohydrate degradation; glycolysis; pyruvate from D-glyceraldehyde 3-phosphate: step 4/5. Its function is as follows. Catalyzes the reversible conversion of 2-phosphoglycerate (2-PG) into phosphoenolpyruvate (PEP). It is essential for the degradation of carbohydrates via glycolysis. This chain is Enolase, found in Streptococcus intermedius.